We begin with the raw amino-acid sequence, 1488 residues long: Chromosome partition protein MukB (1488 aa).

34–41 (GGNGAGKS) serves as a coordination point for ATP. Coiled-coil stretches lie at residues 326 to 418 (LEAD…QYNQ), 444 to 472 (LDTF…QTAH), and 509 to 602 (RHLA…QRAP). The segment at 666–783 (PGGAEDQRLN…SLPIFGRAAR (118 aa)) is flexible hinge. 3 coiled-coil regions span residues 835 to 923 (EAEI…AKLE), 977 to 1116 (EMLS…AKAG), and 1209 to 1265 (VEAI…LQSV). The interval 1049–1074 (ADSGAEERARQRRDELHAQLSNNRSR) is disordered. Basic and acidic residues predominate over residues 1051 to 1065 (SGAEERARQRRDELH).

This sequence belongs to the SMC family. MukB subfamily. As to quaternary structure, homodimerization via its hinge domain. Binds to DNA via its C-terminal region. Interacts, and probably forms a ternary complex, with MukE and MukF via its C-terminal region. The complex formation is stimulated by calcium or magnesium. Interacts with tubulin-related protein FtsZ.

It localises to the cytoplasm. It is found in the nucleoid. In terms of biological role, plays a central role in chromosome condensation, segregation and cell cycle progression. Functions as a homodimer, which is essential for chromosome partition. Involved in negative DNA supercoiling in vivo, and by this means organize and compact chromosomes. May achieve or facilitate chromosome segregation by condensation DNA from both sides of a centrally located replisome during cell division. This chain is Chromosome partition protein MukB, found in Salmonella paratyphi A (strain ATCC 9150 / SARB42).